Consider the following 621-residue polypeptide: 1-deoxy-D-xylulose-5-phosphate synthase (621 aa).

Residues H80 and 121–123 (GHS) contribute to the thiamine diphosphate site. Mg(2+) is bound at residue D152. Residues 153–154 (GA), N181, Y288, and E370 each bind thiamine diphosphate. N181 provides a ligand contact to Mg(2+).

Belongs to the transketolase family. DXPS subfamily. In terms of assembly, homodimer. The cofactor is Mg(2+). Thiamine diphosphate serves as cofactor.

It carries out the reaction D-glyceraldehyde 3-phosphate + pyruvate + H(+) = 1-deoxy-D-xylulose 5-phosphate + CO2. The protein operates within metabolic intermediate biosynthesis; 1-deoxy-D-xylulose 5-phosphate biosynthesis; 1-deoxy-D-xylulose 5-phosphate from D-glyceraldehyde 3-phosphate and pyruvate: step 1/1. Catalyzes the acyloin condensation reaction between C atoms 2 and 3 of pyruvate and glyceraldehyde 3-phosphate to yield 1-deoxy-D-xylulose-5-phosphate (DXP). The polypeptide is 1-deoxy-D-xylulose-5-phosphate synthase (Pseudoalteromonas atlantica (strain T6c / ATCC BAA-1087)).